Reading from the N-terminus, the 113-residue chain is Large ribosomal subunit protein bL19 (113 aa).

The protein belongs to the bacterial ribosomal protein bL19 family.

Functionally, this protein is located at the 30S-50S ribosomal subunit interface and may play a role in the structure and function of the aminoacyl-tRNA binding site. The protein is Large ribosomal subunit protein bL19 of Desulfitobacterium hafniense (strain DSM 10664 / DCB-2).